The primary structure comprises 488 residues: UDP-GalNAc:beta-1,3-N-acetylgalactosaminyltransferase 2 (488 aa).

The Cytoplasmic segment spans residues 1–2 (MR). A helical; Signal-anchor for type II membrane protein membrane pass occupies residues 3–23 (HLLLLFLCPCAIGVAFHLWLF). Residues asparagine 24, asparagine 105, and asparagine 162 are each glycosylated (N-linked (GlcNAc...) asparagine). Over 24 to 488 (NFSGLFTWFP…CGNPCACEDR (465 aa)) the chain is Lumenal.

This sequence belongs to the glycosyltransferase 31 family.

The protein resides in the golgi apparatus membrane. It localises to the endoplasmic reticulum. The catalysed reaction is 3-O-(N-acetyl-beta-D-glucosaminyl-(1-&gt;4)-alpha-D-mannosyl)-L-threonyl-[protein] + UDP-N-acetyl-alpha-D-galactosamine = 3-O-[beta-D-GalNAc-(1-&gt;3)-beta-D-GlcNAc-(1-&gt;4)-alpha-D-Man]-L-Thr-[protein] + UDP + H(+). It participates in protein modification; protein glycosylation. Beta-1,3-N-acetylgalactosaminyltransferase that synthesizes a unique carbohydrate structure, GalNAc-beta-1-3GlcNAc, on N- and O-glycans. Has no galactose nor galactosaminyl transferase activity toward any acceptor substrate. Involved in alpha-dystroglycan (dag1) glycosylation. The chain is UDP-GalNAc:beta-1,3-N-acetylgalactosaminyltransferase 2 (b3galnt2) from Xenopus tropicalis (Western clawed frog).